The chain runs to 141 residues: Nucleoside diphosphate kinase (141 aa).

ATP-binding residues include K11, F59, R87, T93, R104, and N114. Catalysis depends on H117, which acts as the Pros-phosphohistidine intermediate.

It belongs to the NDK family. As to quaternary structure, homotetramer. Mg(2+) is required as a cofactor.

It is found in the cytoplasm. The catalysed reaction is a 2'-deoxyribonucleoside 5'-diphosphate + ATP = a 2'-deoxyribonucleoside 5'-triphosphate + ADP. It catalyses the reaction a ribonucleoside 5'-diphosphate + ATP = a ribonucleoside 5'-triphosphate + ADP. Major role in the synthesis of nucleoside triphosphates other than ATP. The ATP gamma phosphate is transferred to the NDP beta phosphate via a ping-pong mechanism, using a phosphorylated active-site intermediate. This Acidovorax sp. (strain JS42) protein is Nucleoside diphosphate kinase.